A 508-amino-acid chain; its full sequence is DNA-directed RNA polymerase subunit Rpo1C (508 aa).

The interval 1–123 (MIIWKDTAKN…REKYEYEKKV (123 aa)) is unknown. A DNA-directed RNA polymerase subunit Rpo1C region spans residues 124–508 (SSQVLDVIAE…IYKGYPKTKK (385 aa)).

Belongs to the RNA polymerase beta' chain family. Part of the RNA polymerase complex.

It localises to the cytoplasm. The catalysed reaction is RNA(n) + a ribonucleoside 5'-triphosphate = RNA(n+1) + diphosphate. Functionally, DNA-dependent RNA polymerase (RNAP) catalyzes the transcription of DNA into RNA using the four ribonucleoside triphosphates as substrates. Forms part of the jaw domain. The polypeptide is DNA-directed RNA polymerase subunit Rpo1C (Thermoplasma volcanium (strain ATCC 51530 / DSM 4299 / JCM 9571 / NBRC 15438 / GSS1)).